A 318-amino-acid chain; its full sequence is MRLFAFLWSSVAFLSTVQAQVSQTASQTQDDSSTPTPTPTDKYVNIADALRTKTPMATPNRTIMPTRQDPRATEPPTPEPTYLPTPSPTPAPTPDPGPWVAKWMDHDQVQPFKQPDPVTVSEKAAVKFKPQIHITNGCHPYPAVTWWGETSGGLKTKGAPSAGCKGSGWGSQVYGRSTWVKGVWAIMYSWYFPKDSPSTGLGHRHDWEHVIVWIDNPDIENPKILAVTPSAHSGYSKQVPPSADCVDGTSVKVKYESKWPINHALESTTEGGETQDLIMWNQLSENALRAMNSVTWGDANCPFCDGNFQAKLDKAWPF.

The signal sequence occupies residues 1–19; sequence MRLFAFLWSSVAFLSTVQA. Over residues 23-41 the composition is skewed to low complexity; that stretch reads QTASQTQDDSSTPTPTPTD. 2 disordered regions span residues 23–42 and 51–96; these read QTAS…PTDK and RTKT…TPDP. Over residues 55-65 the composition is skewed to polar residues; the sequence is PMATPNRTIMP. Asparagine 60 carries N-linked (GlcNAc...) asparagine glycosylation. Residues 73–96 show a composition bias toward pro residues; the sequence is TEPPTPEPTYLPTPSPTPAPTPDP. The Conserved undecapeptide motif I signature appears at 185 to 195; the sequence is AIMYSWYFPKD. The Hepta-peptide GHRHDWE motif II signature appears at 202–208; sequence GHRHDWE.

It belongs to the Necrosis inducing protein (NPP1) family.

Its subcellular location is the secreted. In terms of biological role, secreted effector that contributes moderately to virulence during infection by P.capsici. Does not cause visible reaction of C.annuum for several days after inoculation, but by 7 days after inoculation, small necrotic lesions become visible. Leads only to chlorotic areas, without necrosis at 7 days after non-host N.benthamiana leaves infection. This Phytophthora capsici protein is NLP effector protein 7.